Reading from the N-terminus, the 185-residue chain is Class I hydrophobin SC6 (185 aa).

The first 17 residues, 1–17 (MVSRVLALISVAMLVGA), serve as a signal peptide directing secretion. Positions 70 to 104 (HIPEVTGSSTEEATSSSTWSGASSKPTDSAPTQCN) are disordered. The span at 75-93 (TGSSTEEATSSSTWSGASS) shows a compositional bias: low complexity. Positions 94 to 104 (KPTDSAPTQCN) are enriched in polar residues. 4 cysteine pairs are disulfide-bonded: cysteine 103-cysteine 164, cysteine 110-cysteine 158, cysteine 111-cysteine 144, and cysteine 165-cysteine 178.

It belongs to the fungal hydrophobin family. As to quaternary structure, self-assembles to form functional amyloid fibrils called rodlets. Self-assembly into fibrillar rodlets occurs spontaneously at hydrophobic:hydrophilic interfaces and the rodlets further associate laterally to form amphipathic monolayers.

Its subcellular location is the secreted. It localises to the cell wall. Functionally, aerial growth, conidiation, and dispersal of filamentous fungi in the environment rely upon a capability of their secreting small amphipathic proteins called hydrophobins (HPBs) with low sequence identity. Class I can self-assemble into an outermost layer of rodlet bundles on aerial cell surfaces, conferring cellular hydrophobicity that supports fungal growth, development and dispersal; whereas Class II form highly ordered films at water-air interfaces through intermolecular interactions but contribute nothing to the rodlet structure. SC6 is a dikaryon-specific class I hydrophobin that contributes to the formation of aerial hyphae and fruiting bodies. In Schizophyllum commune (Split gill fungus), this protein is Class I hydrophobin SC6.